The following is a 951-amino-acid chain: Serine/threonine-protein phosphatase 4 regulatory subunit 1 (951 aa).

HEAT repeat units lie at residues 26–63, 82–119, 127–164, 168–206, 208–246, 248–285, and 287–324; these read ESDVIIIPSALDFVSQDEMLTPLGRLDKYAASENVFNR, RDCIAVLERISRLADDSEPTVRAELMEQVPHIALFCQE, AFSKYLLPIVVRYLADQNNQVRKTSQAALLALLEQELI, DVETKVCPVLIDLTAPDSNDDVKTEAVAIMCKMAPMVGK, ITERLILPRFCEMCCDCRMFHVRKVCAANFGDICSVVGQ, ATEEMLLPRFFQLCSDNVWGVRKACAECFMAVSCATCQ, and IRRTKLSALFINLISDPSRWVRQAAFQSLGPFISTFAN. 4 disordered regions span residues 326–395, 407–501, 539–569, and 592–612; these read SSSG…DMRV, SESP…MATR, HDEAGGAEQRSELQDDAVGAGGELPNCSISE, and GGADVGPGGGGGFSPDEERRP. 3 stretches are compositionally biased toward basic and acidic residues: residues 332–360, 464–483, and 539–551; these read FKDESKSSEDKDRIRDDGVVQEEQSRPED, DLDKELQQDPGERPSPERTG, and HDEAGGAEQRSEL. The stretch at 502-539 is one HEAT 8 repeat; the sequence is KELEEMIENLEPHMDDPDVKAQVEVLSAALRASTLDAH. The span at 594-604 shows a compositional bias: gly residues; sequence ADVGPGGGGGF. 4 HEAT repeats span residues 699 to 735, 777 to 815, 820 to 858, and 862 to 899; these read LTAADLVPIFNGFLKDLDEVRIGVLKHLHDFLKLLHI, RDVYDYLRPIALNLCADKVSSVRWISYKLVSEMVKKLHM, TFGVELINELVENFGRCPKWSGRQAFVFVCQTVIEDDCL, and QFAVHLMPHLLTLANDRVPNVRVLLAKTLRQTLLEKEY. Serine 936 carries the post-translational modification Phosphoserine.

In terms of assembly, serine/threonine-protein phosphatase 4 (PP4) occurs in different assemblies of the catalytic and one or more regulatory subunits. Component of the PP4 complex PPP4C-PPP4R1. Interacts with HDAC3.

Regulatory subunit of serine/threonine-protein phosphatase 4. May play a role in regulation of cell division in renal glomeruli. The PPP4C-PPP4R1 PP4 complex may play a role in dephosphorylation and regulation of HDAC3. Plays a role in the inhibition of TNF-induced NF-kappa-B activation by regulating the dephosphorylation of TRAF2. This Rattus norvegicus (Rat) protein is Serine/threonine-protein phosphatase 4 regulatory subunit 1 (Ppp4r1).